The chain runs to 155 residues: 6,7-dimethyl-8-ribityllumazine synthase (155 aa).

Residues W23, 57-59 (AWE), and 81-83 (CVI) each bind 5-amino-6-(D-ribitylamino)uracil. Residue 86–87 (DT) participates in (2S)-2-hydroxy-3-oxobutyl phosphate binding. Catalysis depends on H89, which acts as the Proton donor. Position 114 (N114) interacts with 5-amino-6-(D-ribitylamino)uracil. Position 128 (R128) interacts with (2S)-2-hydroxy-3-oxobutyl phosphate.

Belongs to the DMRL synthase family. As to quaternary structure, forms an icosahedral capsid composed of 60 subunits, arranged as a dodecamer of pentamers.

It catalyses the reaction (2S)-2-hydroxy-3-oxobutyl phosphate + 5-amino-6-(D-ribitylamino)uracil = 6,7-dimethyl-8-(1-D-ribityl)lumazine + phosphate + 2 H2O + H(+). The protein operates within cofactor biosynthesis; riboflavin biosynthesis; riboflavin from 2-hydroxy-3-oxobutyl phosphate and 5-amino-6-(D-ribitylamino)uracil: step 1/2. Functionally, catalyzes the formation of 6,7-dimethyl-8-ribityllumazine by condensation of 5-amino-6-(D-ribitylamino)uracil with 3,4-dihydroxy-2-butanone 4-phosphate. This is the penultimate step in the biosynthesis of riboflavin. The sequence is that of 6,7-dimethyl-8-ribityllumazine synthase from Stenotrophomonas maltophilia (strain R551-3).